Here is a 319-residue protein sequence, read N- to C-terminus: Transcriptional regulator LsrR (319 aa).

The segment at residues 32 to 55 (QSEISERLGLTRLKVSRLLEKGHQ) is a DNA-binding region (H-T-H motif).

Belongs to the SorC transcriptional regulatory family.

The protein localises to the cytoplasm. Its activity is regulated as follows. Inactivated by phosphorylated autoinducer-2 (phospho-AI-2). Phospho-AI-2 acts by binding to LsrR, which is then unable to bind to the promoter regions, allowing the transcription of the target genes. Transcriptional regulator that represses the expression of the lsr operon (lsrACDBFGE) in the absence of the quorum-sensing signaling molecule autoinducer 2 (AI-2). It also represses the expression of the lsrRK operon. Acts by binding to the intergenic region between the lsr operon and lsrR. In the presence of phosphorylated autoinducer-2 (phospho-AI-2), LsrR is inactivated, leading to the transcription of the genes. The regulatory function of LsrR was thought to be limited to the lsr operon, but it was subsequently shown to be involved, directly or indirectly, in the regulation of SPI-1 and flagella genes. It negatively regulates the expression of those genes, which reduces the ability of Salmonella to invade host cells. The polypeptide is Transcriptional regulator LsrR (Salmonella typhimurium (strain LT2 / SGSC1412 / ATCC 700720)).